The primary structure comprises 348 residues: tRNA pseudouridine synthase D (348 aa).

Phenylalanine 27 is a binding site for substrate. Aspartate 80 (nucleophile) is an active-site residue. Position 129 (asparagine 129) interacts with substrate. A TRUD domain is found at 155–303 (GVPNYFGSQR…VEPARRAVLL (149 aa)). Phenylalanine 329 contacts substrate.

This sequence belongs to the pseudouridine synthase TruD family.

It catalyses the reaction uridine(13) in tRNA = pseudouridine(13) in tRNA. In terms of biological role, responsible for synthesis of pseudouridine from uracil-13 in transfer RNAs. The sequence is that of tRNA pseudouridine synthase D from Pectobacterium atrosepticum (strain SCRI 1043 / ATCC BAA-672) (Erwinia carotovora subsp. atroseptica).